The chain runs to 451 residues: Arginine biosynthesis bifunctional protein ArgJ, mitochondrial (451 aa).

Positions 180, 209, 220, 307, 446, and 451 each coordinate substrate. Threonine 220 acts as the Nucleophile in catalysis.

The protein belongs to the ArgJ family. Heterodimer of an alpha and a beta chain. In terms of processing, the alpha and beta chains are autoproteolytically processed from a single precursor protein within the mitochondrion.

It localises to the mitochondrion matrix. It carries out the reaction N(2)-acetyl-L-ornithine + L-glutamate = N-acetyl-L-glutamate + L-ornithine. The catalysed reaction is L-glutamate + acetyl-CoA = N-acetyl-L-glutamate + CoA + H(+). It participates in amino-acid biosynthesis; L-arginine biosynthesis; L-ornithine and N-acetyl-L-glutamate from L-glutamate and N(2)-acetyl-L-ornithine (cyclic): step 1/1. Its pathway is amino-acid biosynthesis; L-arginine biosynthesis; N(2)-acetyl-L-ornithine from L-glutamate: step 1/4. Catalyzes two activities which are involved in the cyclic version of arginine biosynthesis: the synthesis of acetylglutamate from glutamate and acetyl-CoA, and of ornithine by transacetylation between acetylornithine and glutamate. This Fusarium vanettenii (strain ATCC MYA-4622 / CBS 123669 / FGSC 9596 / NRRL 45880 / 77-13-4) (Fusarium solani subsp. pisi) protein is Arginine biosynthesis bifunctional protein ArgJ, mitochondrial.